A 342-amino-acid chain; its full sequence is S-adenosylmethionine:tRNA ribosyltransferase-isomerase (342 aa).

Belongs to the QueA family. As to quaternary structure, monomer.

It is found in the cytoplasm. It carries out the reaction 7-aminomethyl-7-carbaguanosine(34) in tRNA + S-adenosyl-L-methionine = epoxyqueuosine(34) in tRNA + adenine + L-methionine + 2 H(+). It functions in the pathway tRNA modification; tRNA-queuosine biosynthesis. Its function is as follows. Transfers and isomerizes the ribose moiety from AdoMet to the 7-aminomethyl group of 7-deazaguanine (preQ1-tRNA) to give epoxyqueuosine (oQ-tRNA). In Novosphingobium aromaticivorans (strain ATCC 700278 / DSM 12444 / CCUG 56034 / CIP 105152 / NBRC 16084 / F199), this protein is S-adenosylmethionine:tRNA ribosyltransferase-isomerase.